The chain runs to 267 residues: Hydroxynaphthalene reductase-like protein Arp2 (267 aa).

Positions 25, 45, 71, and 98 each coordinate NADP(+). Catalysis depends on proton donor residues Ser-147 and Ser-148. Tyr-162, Lys-166, Val-195, and Thr-197 together coordinate NADP(+). Tyr-162 functions as the Proton acceptor in the catalytic mechanism. Lys-166 serves as the catalytic Lowers pKa of active site Tyr.

It belongs to the short-chain dehydrogenases/reductases (SDR) family.

In terms of biological role, hydroxynaphthalene reductase-like protein; part of the Pks2 gene cluster that mediates the formation of infectious structures (appressoria), enabling these fungi to kill insects faster. The product of the Pks2 gene cluster is different from the one of Pks1 and has still not been identified. In Metarhizium acridum (strain CQMa 102), this protein is Hydroxynaphthalene reductase-like protein Arp2.